A 642-amino-acid chain; its full sequence is Threonine--tRNA ligase (642 aa).

Residues 1–61 enclose the TGS domain; the sequence is MPIITLPDGS…EEDASLEIIT (61 aa). The tract at residues 244 to 535 is catalytic; the sequence is DHRKIGKQLD…LIEEYAGFFP (292 aa). Cys-335, His-386, and His-512 together coordinate Zn(2+).

This sequence belongs to the class-II aminoacyl-tRNA synthetase family. Homodimer. Zn(2+) is required as a cofactor.

The protein resides in the cytoplasm. The enzyme catalyses tRNA(Thr) + L-threonine + ATP = L-threonyl-tRNA(Thr) + AMP + diphosphate + H(+). Catalyzes the attachment of threonine to tRNA(Thr) in a two-step reaction: L-threonine is first activated by ATP to form Thr-AMP and then transferred to the acceptor end of tRNA(Thr). Also edits incorrectly charged L-seryl-tRNA(Thr). In Vibrio vulnificus (strain CMCP6), this protein is Threonine--tRNA ligase.